Consider the following 169-residue polypeptide: Endoribonuclease YbeY (169 aa).

Zn(2+) is bound by residues His-135, His-139, and His-145.

It belongs to the endoribonuclease YbeY family. It depends on Zn(2+) as a cofactor.

The protein localises to the cytoplasm. Functionally, single strand-specific metallo-endoribonuclease involved in late-stage 70S ribosome quality control and in maturation of the 3' terminus of the 16S rRNA. This chain is Endoribonuclease YbeY, found in Lachnospira eligens (strain ATCC 27750 / DSM 3376 / VPI C15-48 / C15-B4) (Eubacterium eligens).